We begin with the raw amino-acid sequence, 445 residues long: Tryptamine benzoyltransferase 1 (445 aa).

Active-site proton acceptor residues include H150 and D382.

The protein belongs to the plant acyltransferase family.

Functionally, hydroxycinnamoyl transferase that catalyzes the transfer of an acyl from benzoyl-CoA to tryptamine, to produce benzoyl tryptamine. Serotonin and tyramine serve as acyl acceptors in vitro. Can use p-coumaroyl-CoA, and to a lesser extent caffeoyl-CoA, as acyl donors. The protein is Tryptamine benzoyltransferase 1 of Oryza sativa subsp. japonica (Rice).